Reading from the N-terminus, the 295-residue chain is Spermatogenesis-associated protein 4 (295 aa).

Positions 1–34 (MAAAGQAEECLPLPAAESSKTSLPTPPAVPAGKK) are disordered. Positions 48 to 154 (SRLSRSVLRW…QEIYTLLTHQ (107 aa)) constitute a Calponin-homology (CH) domain. The tract at residues 251-295 (KRRYKSRGSKEKAAQPLSKSDNDGNARKEIHVKQSGNPCENTENL) is disordered. Positions 270 to 282 (SDNDGNARKEIHV) are enriched in basic and acidic residues. A compositionally biased stretch (polar residues) spans 284–295 (QSGNPCENTENL).

As to expression, testis.

Its subcellular location is the nucleus. Functionally, may play a role in apoptosis regulation. This chain is Spermatogenesis-associated protein 4 (Spata4), found in Mus musculus (Mouse).